The primary structure comprises 123 residues: Phospholipase A2 (123 aa).

Cystine bridges form between Cys-11–Cys-77, Cys-27–Cys-123, Cys-29–Cys-45, Cys-44–Cys-105, Cys-51–Cys-98, Cys-61–Cys-91, and Cys-84–Cys-96. Ca(2+) is bound by residues Tyr-28, Gly-30, and Gly-32. Residue His-48 is part of the active site. A Ca(2+)-binding site is contributed by Asp-49. Residue Asp-99 is part of the active site.

It belongs to the phospholipase A2 family. In terms of assembly, monomer or homodimer. Ca(2+) is required as a cofactor. Activated by trypsin cleavage in the duodenum. Can also be activated by thrombin or autocatalytically.

The protein resides in the secreted. The enzyme catalyses a 1,2-diacyl-sn-glycero-3-phosphocholine + H2O = a 1-acyl-sn-glycero-3-phosphocholine + a fatty acid + H(+). It catalyses the reaction 1,2-ditetradecanoyl-sn-glycero-3-phosphocholine + H2O = 1-tetradecanoyl-sn-glycero-3-phosphocholine + tetradecanoate + H(+). The catalysed reaction is 1,2-dihexadecanoyl-sn-glycero-3-phosphocholine + H2O = 1-hexadecanoyl-sn-glycero-3-phosphocholine + hexadecanoate + H(+). It carries out the reaction 1-hexadecanoyl-2-(9Z-octadecenoyl)-sn-glycero-3-phosphocholine + H2O = 1-hexadecanoyl-sn-glycero-3-phosphocholine + (9Z)-octadecenoate + H(+). The enzyme catalyses 1-hexadecanoyl-2-(5Z,8Z,11Z,14Z-eicosatetraenoyl)-sn-glycero-3-phosphocholine + H2O = 1-hexadecanoyl-sn-glycero-3-phosphocholine + (5Z,8Z,11Z,14Z)-eicosatetraenoate + H(+). It catalyses the reaction 1-hexadecanoyl-2-(9Z-octadecenoyl)-sn-glycero-3-phospho-(1'-sn-glycerol) + H2O = 1-hexadecanoyl-sn-glycero-3-phospho-(1'-sn-glycerol) + (9Z)-octadecenoate + H(+). The catalysed reaction is N-hexadecanoyl-1,2-di-(9Z-octadecenoyl)-sn-glycero-3-phosphoethanolamine + H2O = N-hexadecanoyl-1-(9Z-octadecenoyl)-sn-glycero-3-phosphoethanolamine + (9Z)-octadecenoate + H(+). It carries out the reaction 1-hexadecanoyl-2-(9Z,12Z-octadecadienoyl)-sn-glycero-3-phosphoethanolamine + H2O = 1-hexadecanoyl-sn-glycero-3-phosphoethanolamine + (9Z,12Z)-octadecadienoate + H(+). The enzyme catalyses N,1-dihexadecanoyl-2-(9Z,12Z-octadecadienoyl)-sn-glycero-3-phosphoethanolamine + H2O = N,1-dihexadecanoyl-sn-glycero-3-phosphoethanolamine + (9Z,12Z)-octadecadienoate + H(+). Its function is as follows. Secretory calcium-dependent phospholipase A2 that primarily targets dietary phospholipids in the intestinal tract. Hydrolyzes the ester bond of the fatty acyl group attached at sn-2 position of phospholipids (phospholipase A2 activity) with preference for phosphatidylethanolamines and phosphatidylglycerols over phosphatidylcholines. May play a role in the biosynthesis of N-acyl ethanolamines that regulate energy metabolism and inflammation in the intestinal tract. Hydrolyzes N-acyl phosphatidylethanolamines to N-acyl lysophosphatidylethanolamines, which are further cleaved by a lysophospholipase D to release N-acyl ethanolamines. May act in an autocrine and paracrine manner. Has anti-helminth activity in a process regulated by gut microbiota. Upon helminth infection of intestinal epithelia, directly affects phosphatidylethanolamine contents in the membrane of helminth larvae, likely controlling an array of phospholipid-mediated cellular processes such as membrane fusion and cell division while providing for better immune recognition, ultimately reducing larvae integrity and infectivity. The sequence is that of Phospholipase A2 (PLA2G1B) from Ovis aries (Sheep).